The primary structure comprises 353 residues: Melanin-concentrating hormone receptor 1 (353 aa).

Residues 1 to 26 (MDLQTSLLSTGPNASNISDGQDNLTL) form a disordered region. At 1–45 (MDLQTSLLSTGPNASNISDGQDNLTLPGSPPRTGSVSYINIIMPS) the chain is on the extracellular side. Asparagine 13, asparagine 16, and asparagine 23 each carry an N-linked (GlcNAc...) asparagine glycan. The helical transmembrane segment at 46 to 66 (VFGTICLLGIVGNSTVIFAVV) threads the bilayer. Residues 67–79 (KKSKLHWCSNVPD) lie on the Cytoplasmic side of the membrane. A helical transmembrane segment spans residues 80 to 100 (IFIINLSVVDLLFLLGMPFMI). Over 101–116 (HQLMGNGVWHFGETMC) the chain is Extracellular. Cysteine 116 and cysteine 194 are disulfide-bonded. The chain crosses the membrane as a helical span at residues 117–139 (TLITAMDANSQFTSTYILTAMTI). Residues 140 to 161 (DRYLATVHPISSTKFRKPSMAT) are Cytoplasmic-facing. Residues 162-182 (LVICLLWALSFISITPVWLYA) traverse the membrane as a helical segment. Topologically, residues 183–204 (RLIPFPGGAVGCGIRLPNPDTD) are extracellular. Residues 205–225 (LYWFTLYQFFLAFALPFVVIT) form a helical membrane-spanning segment. The Cytoplasmic segment spans residues 226–256 (AAYVKILQRMTSSVAPASQRSIRLRTKRVTR). Residues 257 to 277 (TAIAICLVFFVCWAPYYVLQL) traverse the membrane as a helical segment. Over 278-294 (TQLSISRPTLTFVYLYN) the chain is Extracellular. A helical membrane pass occupies residues 295-315 (AAISLGYANSCLNPFVYIVLC). Topologically, residues 316 to 353 (ETFRKRLVLSVKPAAQGQLRTVSNAQTADEERTESKGT) are cytoplasmic.

Belongs to the G-protein coupled receptor 1 family. As to quaternary structure, interacts with NCDN. High level in the brain, moderate amounts in the eye and skeletal muscle, and small amounts in tongue and pituitary.

The protein localises to the cell membrane. Functionally, receptor for melanin-concentrating hormone, coupled to G proteins that inhibit adenylyl cyclase. The polypeptide is Melanin-concentrating hormone receptor 1 (Rattus norvegicus (Rat)).